The primary structure comprises 499 residues: MIRATSLYAAIDLGSNSFHMLVVREVAGTLQTLARIKRKVRLAAGLYGDNRLSSDAMQRGWQCLRLFAEHLQDIPPTQVRVVATATLRLATNAAEFLGPASAILGCPVQVISGEEEARLIYQGVAHTTGGSDERLVVDIGGGSTELVVGRGAQALELFSLEMGCVTWLERYFNDRSLTRENFERAEQAAREKIRPVAFRLLAQGWQVCVGASGTVQALQEIMVAQGMDEHITLSKLLQLKQRAIHCGKLEELEIEGLTLERALVFPSGLAILLAVFAELGITTMTLAGGALREGMMYGMMALPVGGDIRQRTLENLQRRYQLDTEQAQRVTWLADGFARQVAEAWQLDERCFTLLRCASMIHEIGLSIDIKRAPQHAAYLVRHTDLPGFTPAQQKLIATLLQNQSNHINLTQLNEQNCLAPRIAQRLCRLMRLAIIFASRRRDDALPAVELRAAEETLYVILPQGWLSQHPLRAEYLEQESQWQSYVHWPLLLEETSQV.

This sequence belongs to the GppA/Ppx family. GppA subfamily.

It carries out the reaction guanosine 3'-diphosphate 5'-triphosphate + H2O = guanosine 3',5'-bis(diphosphate) + phosphate + H(+). Its pathway is purine metabolism; ppGpp biosynthesis; ppGpp from GTP: step 2/2. Its function is as follows. Catalyzes the conversion of pppGpp to ppGpp. Guanosine pentaphosphate (pppGpp) is a cytoplasmic signaling molecule which together with ppGpp controls the 'stringent response', an adaptive process that allows bacteria to respond to amino acid starvation, resulting in the coordinated regulation of numerous cellular activities. This Sodalis glossinidius (strain morsitans) protein is Guanosine-5'-triphosphate,3'-diphosphate pyrophosphatase.